Here is a 243-residue protein sequence, read N- to C-terminus: Aquaporin SIP1-2 (243 aa).

The next 2 membrane-spanning stretches (helical) occupy residues 9–29 (AAAADAVVTFLWVLCVSTLGA) and 45–65 (FALLVTVSLLSVLLFVFNILC). The NPA 1 motif lies at 74–76 (NPT). A run of 3 helical transmembrane segments spans residues 98 to 118 (LPAQAAGAVGGALAISELMPA), 136 to 156 (GAGAELVLTFVITLAVLLIIV), and 163 to 183 (IIKTWMISICTLCLVLSGAAY). Residues 189 to 191 (NPA) carry the NPA 2 motif. A helical membrane pass occupies residues 211–231 (VYWICPFIGAILAAWIFRAMF).

The protein belongs to the MIP/aquaporin (TC 1.A.8) family. SIP (TC 1.A.8.10) subfamily.

It localises to the membrane. Its function is as follows. Aquaporins facilitate the transport of water and small neutral solutes across cell membranes. This chain is Aquaporin SIP1-2 (SIP1-2), found in Zea mays (Maize).